Here is a 1101-residue protein sequence, read N- to C-terminus: Cytospin-A (1101 aa).

2 disordered regions span residues 1 to 170 and 280 to 366; these read MRKA…NQIS and SDCG…SGNA. 2 stretches are compositionally biased toward polar residues: residues 29–48 and 64–86; these read ESSAPTASKVSRPGSSLSKA and ASNSVKVKKNSTTSYPNSGTAMS. The segment covering 93–110 has biased composition (low complexity); it reads RSSAGSSSNTKRSGSSGA. Composition is skewed to basic and acidic residues over residues 114–125 and 151–165; these read GSSRERLRERSR and GRTDSDMIRMSKSKS. Positions 162–254 form a coiled coil; it reads KSKSDNQISD…LKDRLNALGF (93 aa). Positions 333–355 are enriched in low complexity; that stretch reads LTSSDDALDAPSSSSESEGLPST. Coiled-coil stretches lie at residues 373-427 and 492-785; these read CLTE…MDSL and QHLS…RGRV. The disordered stretch occupies residues 923-978; sequence SISVSRRSSEELKRDISVPDGSSAPSLMVMTSPSPQLSLSSSSPTASVTPTARSRI. Basic and acidic residues predominate over residues 929 to 939; that stretch reads RSSEELKRDIS. The segment covering 953-975 has biased composition (low complexity); sequence TSPSPQLSLSSSSPTASVTPTAR. The Calponin-homology (CH) domain maps to 995 to 1100; the sequence is GSKRNALLKW…YVTSIYKYFE (106 aa).

This sequence belongs to the cytospin-A family. May interact with both microtubules and actin cytoskeleton.

Its subcellular location is the cytoplasm. The protein localises to the cytoskeleton. It localises to the spindle. It is found in the cell junction. The protein resides in the gap junction. In terms of biological role, involved in cytokinesis and spindle organization. May play a role in actin cytoskeleton organization and microtubule stabilization and hence required for proper cell adhesion and migration. The chain is Cytospin-A (specc1l) from Xenopus tropicalis (Western clawed frog).